The chain runs to 73 residues: Plasticin-A1 (73 aa).

A signal peptide spans 1–22; that stretch reads MAFLKKSLFLVLFLAIVPLSIC. Residues 23-42 constitute a propeptide that is removed on maturation; that stretch reads EEEKREEENEEKQEDDDQSE. Positions 25–45 are disordered; sequence EKREEENEEKQEDDDQSEKRG. Residues 30-40 show a composition bias toward acidic residues; that stretch reads ENEEKQEDDDQ. G70 carries the glycine amide modification. Positions 72–73 are excised as a propeptide; the sequence is ES.

It belongs to the frog skin active peptide (FSAP) family. Plasticin subfamily. Expressed by the skin glands.

It is found in the secreted. The protein resides in the target cell membrane. In terms of biological role, peptide with no antimicrobial activity. May act in synergy with cationic peptides by enhancing their activity. Has a moderate hemolytic activity. This chain is Plasticin-A1, found in Agalychnis annae (Blue-sided leaf frog).